We begin with the raw amino-acid sequence, 336 residues long: Protein RecA (336 aa).

66–73 provides a ligand contact to ATP; it reads GNESSGKT.

It belongs to the RecA family.

Its subcellular location is the cytoplasm. In terms of biological role, can catalyze the hydrolysis of ATP in the presence of single-stranded DNA, the ATP-dependent uptake of single-stranded DNA by duplex DNA, and the ATP-dependent hybridization of homologous single-stranded DNAs. It interacts with LexA causing its activation and leading to its autocatalytic cleavage. The protein is Protein RecA of Mycoplasma pneumoniae (strain ATCC 29342 / M129 / Subtype 1) (Mycoplasmoides pneumoniae).